The primary structure comprises 235 residues: Putative uridine kinase C227.14 (235 aa).

ATP is bound at residue 36 to 43; the sequence is GGPGSGKS.

The protein belongs to the uridine kinase family.

It is found in the cytoplasm. The protein localises to the nucleus. It catalyses the reaction uridine + ATP = UMP + ADP + H(+). It carries out the reaction cytidine + ATP = CMP + ADP + H(+). Its pathway is pyrimidine metabolism; CTP biosynthesis via salvage pathway; CTP from cytidine: step 1/3. It functions in the pathway pyrimidine metabolism; UMP biosynthesis via salvage pathway; UMP from uridine: step 1/1. In Schizosaccharomyces pombe (strain 972 / ATCC 24843) (Fission yeast), this protein is Putative uridine kinase C227.14.